We begin with the raw amino-acid sequence, 67 residues long: Large ribosomal subunit protein uL29 (67 aa).

The protein belongs to the universal ribosomal protein uL29 family.

This chain is Large ribosomal subunit protein uL29, found in Methanosarcina acetivorans (strain ATCC 35395 / DSM 2834 / JCM 12185 / C2A).